Reading from the N-terminus, the 59-residue chain is Large ribosomal subunit protein uL30 (59 aa).

This sequence belongs to the universal ribosomal protein uL30 family. As to quaternary structure, part of the 50S ribosomal subunit.

In Buchnera aphidicola subsp. Acyrthosiphon kondoi (Acyrthosiphon kondoi symbiotic bacterium), this protein is Large ribosomal subunit protein uL30.